The sequence spans 469 residues: Phosphoenolpyruvate carboxylase (469 aa).

This sequence belongs to the PEPCase type 2 family. In terms of assembly, homotetramer. Mg(2+) serves as cofactor.

The catalysed reaction is oxaloacetate + phosphate = phosphoenolpyruvate + hydrogencarbonate. Its function is as follows. Catalyzes the irreversible beta-carboxylation of phosphoenolpyruvate (PEP) to form oxaloacetate (OAA), a four-carbon dicarboxylic acid source for the tricarboxylic acid cycle. The chain is Phosphoenolpyruvate carboxylase from Pyrococcus horikoshii (strain ATCC 700860 / DSM 12428 / JCM 9974 / NBRC 100139 / OT-3).